A 347-amino-acid chain; its full sequence is GTP 3',8-cyclase (347 aa).

The Radical SAM core domain occupies 10–242 (RLNRPIGVLR…ERINARWPLE (233 aa)). Residue arginine 19 coordinates GTP. [4Fe-4S] cluster-binding residues include cysteine 26 and cysteine 30. S-adenosyl-L-methionine is bound at residue tyrosine 32. A [4Fe-4S] cluster-binding site is contributed by cysteine 33. Arginine 65 is a GTP binding site. Glycine 69 serves as a coordination point for S-adenosyl-L-methionine. GTP is bound at residue threonine 104. Serine 129 is a binding site for S-adenosyl-L-methionine. Lysine 178 is a GTP binding site. Methionine 212 serves as a coordination point for S-adenosyl-L-methionine. [4Fe-4S] cluster is bound by residues cysteine 275 and cysteine 278. 280-282 (RLR) is a GTP binding site. Cysteine 292 is a [4Fe-4S] cluster binding site.

It belongs to the radical SAM superfamily. MoaA family. Monomer and homodimer. [4Fe-4S] cluster is required as a cofactor.

The catalysed reaction is GTP + AH2 + S-adenosyl-L-methionine = (8S)-3',8-cyclo-7,8-dihydroguanosine 5'-triphosphate + 5'-deoxyadenosine + L-methionine + A + H(+). Its pathway is cofactor biosynthesis; molybdopterin biosynthesis. In terms of biological role, catalyzes the cyclization of GTP to (8S)-3',8-cyclo-7,8-dihydroguanosine 5'-triphosphate. The chain is GTP 3',8-cyclase from Synechococcus sp. (strain CC9605).